The following is a 447-amino-acid chain: Protein O-GlcNAcase (447 aa).

The GH84 domain occupies 1-277 (MLTGVIEGFY…TTGAYLADPD (277 aa)). 3 residues coordinate a protein: Gly8, Lys39, and Asp115. The Proton donor role is filled by Asp116. Residues Tyr160, 219–221 (WDN), Asp226, and Asn254 contribute to the a protein site.

The protein belongs to the glycosyl hydrolase 84 family.

The enzyme catalyses 3-O-(N-acetyl-beta-D-glucosaminyl)-L-seryl-[protein] + H2O = N-acetyl-D-glucosamine + L-seryl-[protein]. It carries out the reaction 3-O-(N-acetyl-beta-D-glucosaminyl)-L-threonyl-[protein] + H2O = L-threonyl-[protein] + N-acetyl-D-glucosamine. With respect to regulation, inhibited by PUGNac (O-(2-acetamido-2-deoxy-D-glucopyranosylidene)amino-N-phenylcarbamate). Its function is as follows. Cleaves GlcNAc from O-glycosylated proteins. Can use p-nitrophenyl-beta-GlcNAc and 4-methylumbelliferone-GlcNAc as substrate (in vitro). The protein is Protein O-GlcNAcase of Oceanicola granulosus (strain ATCC BAA-861 / DSM 15982 / KCTC 12143 / HTCC2516).